We begin with the raw amino-acid sequence, 437 residues long: Probable indole-3-pyruvate monooxygenase YUCCA3 (437 aa).

Residue Gly-41–Gly-46 participates in FAD binding. Gly-212–Gly-217 contributes to the NADP(+) binding site.

This sequence belongs to the FMO family. FAD serves as cofactor.

The enzyme catalyses indole-3-pyruvate + NADPH + O2 + H(+) = (indol-3-yl)acetate + CO2 + NADP(+) + H2O. It participates in plant hormone metabolism; auxin biosynthesis. Its function is as follows. Involved in auxin biosynthesis. Belongs to the set of redundant YUCCA genes probably responsible for auxin biosynthesis in roots. The chain is Probable indole-3-pyruvate monooxygenase YUCCA3 (YUC3) from Arabidopsis thaliana (Mouse-ear cress).